The following is a 372-amino-acid chain: tRNA-specific 2-thiouridylase MnmA (372 aa).

ATP contacts are provided by residues 16-23 (GMSGGVDS) and M42. The interval 102 to 104 (NPD) is interaction with target base in tRNA. The active-site Nucleophile is C107. Residues C107 and C205 are joined by a disulfide bond. G132 provides a ligand contact to ATP. Residues 155–157 (KDQ) are interaction with tRNA. C205 serves as the catalytic Cysteine persulfide intermediate. The segment at 317–318 (RY) is interaction with tRNA.

It belongs to the MnmA/TRMU family.

It localises to the cytoplasm. It carries out the reaction S-sulfanyl-L-cysteinyl-[protein] + uridine(34) in tRNA + AH2 + ATP = 2-thiouridine(34) in tRNA + L-cysteinyl-[protein] + A + AMP + diphosphate + H(+). Catalyzes the 2-thiolation of uridine at the wobble position (U34) of tRNA, leading to the formation of s(2)U34. This Shewanella sp. (strain W3-18-1) protein is tRNA-specific 2-thiouridylase MnmA.